The primary structure comprises 116 residues: Large ribosomal subunit protein uL18 (116 aa).

This sequence belongs to the universal ribosomal protein uL18 family. In terms of assembly, part of the 50S ribosomal subunit; part of the 5S rRNA/L5/L18/L25 subcomplex. Contacts the 5S and 23S rRNAs.

This is one of the proteins that bind and probably mediate the attachment of the 5S RNA into the large ribosomal subunit, where it forms part of the central protuberance. This Shewanella piezotolerans (strain WP3 / JCM 13877) protein is Large ribosomal subunit protein uL18.